We begin with the raw amino-acid sequence, 490 residues long: GTPase Der (490 aa).

2 consecutive EngA-type G domains span residues 3–166 (PVVA…MEDL) and 203–376 (IKLA…DSST). GTP-binding positions include 9-16 (GRPNVGKS), 56-60 (DTGGI), 118-121 (NKTD), 209-216 (GRPNVGKS), 256-260 (DTAGV), and 321-324 (NKWD). In terms of domain architecture, KH-like spans 377 to 461 (RRVGTSMLTR…PIRIQFKEGE (85 aa)).

It belongs to the TRAFAC class TrmE-Era-EngA-EngB-Septin-like GTPase superfamily. EngA (Der) GTPase family. Associates with the 50S ribosomal subunit.

In terms of biological role, GTPase that plays an essential role in the late steps of ribosome biogenesis. The chain is GTPase Der from Escherichia fergusonii (strain ATCC 35469 / DSM 13698 / CCUG 18766 / IAM 14443 / JCM 21226 / LMG 7866 / NBRC 102419 / NCTC 12128 / CDC 0568-73).